A 608-amino-acid polypeptide reads, in one-letter code: Centromere DNA-binding protein complex CBF3 subunit B (608 aa).

Positions 14–42 (CSVCTRRKVKCDRMIPCGNCRKRGQDSEC) form a DNA-binding region, zn(2)-C6 fungal-type. Ser575 is subject to Phosphoserine.

Component of the CBF3 copmplex, which is formed of CBF3A/CBF2, CBF3B/CEP3, CBF3C/CTF13 and CBF3D.

It is found in the nucleus. Its subcellular location is the chromosome. The protein localises to the centromere. Acts as a component of the centromere DNA-binding protein complex CBF3, which is essential for chromosome segregation and movement of centromeres along microtubules. CBF3 is required for the recruitment of other kinetochore complexes to CEN DNA. It plays a role in the attachment of chromosomes to the spindle and binds selectively to a highly conserved DNA sequence called CDEIII, found in centromers and in several promoters. The sequence is that of Centromere DNA-binding protein complex CBF3 subunit B (CEP3) from Saccharomyces cerevisiae (strain ATCC 204508 / S288c) (Baker's yeast).